A 275-amino-acid chain; its full sequence is Large ribosomal subunit protein uL2 (275 aa).

2 disordered regions span residues 36 to 55 (GLTG…RRMG) and 224 to 263 (VVMN…RQNK).

This sequence belongs to the universal ribosomal protein uL2 family. As to quaternary structure, part of the 50S ribosomal subunit. Forms a bridge to the 30S subunit in the 70S ribosome.

Functionally, one of the primary rRNA binding proteins. Required for association of the 30S and 50S subunits to form the 70S ribosome, for tRNA binding and peptide bond formation. It has been suggested to have peptidyltransferase activity; this is somewhat controversial. Makes several contacts with the 16S rRNA in the 70S ribosome. The chain is Large ribosomal subunit protein uL2 from Rhodospirillum centenum (strain ATCC 51521 / SW).